Consider the following 184-residue polypeptide: Large ribosomal subunit protein uL5c (184 aa).

This sequence belongs to the universal ribosomal protein uL5 family. Part of the 50S ribosomal subunit; contacts the 5S rRNA.

Its subcellular location is the plastid. The protein localises to the chloroplast. In terms of biological role, binds 5S rRNA, forms part of the central protuberance of the 50S subunit. The polypeptide is Large ribosomal subunit protein uL5c (rpl5) (Mesostigma viride (Green alga)).